Here is a 323-residue protein sequence, read N- to C-terminus: Flavone synthase cfoJ (323 aa).

FMN serves as cofactor.

It functions in the pathway secondary metabolite biosynthesis; flavonoid biosynthesis. FMN-dependent oxidoreductase; part of the gene cluster that mediates the biosynthesis of chlorflavonin, a fungal flavonoid with acetolactate synthase inhibitory activity. Within the pathway, cfoJ acts as a flavone synthase (FNS) and catalyzes the formation of a double bond between C2 and C3, converting the flavanone into a flavone. The pathway begins with the PKS-NRPS hybrid synthetase cfoA that uses benzoic acid or p-hydroxybenzoic acid as a starter unit with four rounds of chain elongation using malonyl-CoA to form the chalcone skeleton. Then, a new type of chalcone isomerase, cfoK, catalyzes the conversion of the chalcone into a flavanone by a histidine-mediated oxa-Michael addition mechanism. The desaturation of flavanone to flavone is catalyzed by a new type of flavone synthase, the flavin mononucleotide (FMN)-dependent oxidoreductase cfoJ. Monooxygenases cfoF, cfoG, and P450 cfoH are responsible for the hydroxylation of the flavonoid skeleton at sites C3, C8, and C2', respectively. Like cfoF, the dehydratase cfoI plays also a role in the hydroxylation of position C3. Methyltransferases cfoB, cfoC, and cfoD then catalyze the methylation of C7-OH, C8-OH, and C3-OH, respectively. Finally, the monooxygenase cfoE is responsible for the chlorination of flavonoid at position C3'. In Aspergillus candidus, this protein is Flavone synthase cfoJ.